We begin with the raw amino-acid sequence, 650 residues long: Acetyl-coenzyme A synthetase (650 aa).

CoA contacts are provided by residues 191–194, threonine 311, and asparagine 335; that span reads RGGR. Residues 387–389, 411–416, aspartate 501, and arginine 516 contribute to the ATP site; these read GEP and DTWWQT. Residue serine 524 coordinates CoA. Arginine 527 contributes to the ATP binding site. Mg(2+)-binding residues include valine 538, histidine 540, and isoleucine 543. CoA is bound at residue arginine 585. An N6-acetyllysine modification is found at lysine 610.

The protein belongs to the ATP-dependent AMP-binding enzyme family. Requires Mg(2+) as cofactor. Acetylated. Deacetylation by the SIR2-homolog deacetylase activates the enzyme.

The catalysed reaction is acetate + ATP + CoA = acetyl-CoA + AMP + diphosphate. Its function is as follows. Catalyzes the conversion of acetate into acetyl-CoA (AcCoA), an essential intermediate at the junction of anabolic and catabolic pathways. AcsA undergoes a two-step reaction. In the first half reaction, AcsA combines acetate with ATP to form acetyl-adenylate (AcAMP) intermediate. In the second half reaction, it can then transfer the acetyl group from AcAMP to the sulfhydryl group of CoA, forming the product AcCoA. This Vibrio vulnificus (strain YJ016) protein is Acetyl-coenzyme A synthetase.